The sequence spans 936 residues: Isoleucine--tRNA ligase (936 aa).

Residues 58-68 (PYANGRAHLGT) carry the 'HIGH' region motif. An L-isoleucyl-5'-AMP-binding site is contributed by Glu-561. The 'KMSKS' region motif lies at 602–606 (KMSKS). Lys-605 contacts ATP. The Zn(2+) site is built by Cys-899, Cys-902, Cys-919, and Cys-922.

It belongs to the class-I aminoacyl-tRNA synthetase family. IleS type 1 subfamily. Monomer. Requires Zn(2+) as cofactor.

Its subcellular location is the cytoplasm. It carries out the reaction tRNA(Ile) + L-isoleucine + ATP = L-isoleucyl-tRNA(Ile) + AMP + diphosphate. In terms of biological role, catalyzes the attachment of isoleucine to tRNA(Ile). As IleRS can inadvertently accommodate and process structurally similar amino acids such as valine, to avoid such errors it has two additional distinct tRNA(Ile)-dependent editing activities. One activity is designated as 'pretransfer' editing and involves the hydrolysis of activated Val-AMP. The other activity is designated 'posttransfer' editing and involves deacylation of mischarged Val-tRNA(Ile). The polypeptide is Isoleucine--tRNA ligase (Coxiella burnetii (strain Dugway 5J108-111)).